Here is a 938-residue protein sequence, read N- to C-terminus: Isoleucine--tRNA ligase (938 aa).

Residues 58–68 (PYANGNIHLGH) carry the 'HIGH' region motif. Residue E562 participates in L-isoleucyl-5'-AMP binding. The 'KMSKS' region signature appears at 603–607 (KMSKS). Position 606 (K606) interacts with ATP. Residues C901, C904, C921, and C924 each coordinate Zn(2+).

The protein belongs to the class-I aminoacyl-tRNA synthetase family. IleS type 1 subfamily. In terms of assembly, monomer. Zn(2+) serves as cofactor.

It is found in the cytoplasm. The catalysed reaction is tRNA(Ile) + L-isoleucine + ATP = L-isoleucyl-tRNA(Ile) + AMP + diphosphate. Catalyzes the attachment of isoleucine to tRNA(Ile). As IleRS can inadvertently accommodate and process structurally similar amino acids such as valine, to avoid such errors it has two additional distinct tRNA(Ile)-dependent editing activities. One activity is designated as 'pretransfer' editing and involves the hydrolysis of activated Val-AMP. The other activity is designated 'posttransfer' editing and involves deacylation of mischarged Val-tRNA(Ile). The protein is Isoleucine--tRNA ligase of Glaesserella parasuis serovar 5 (strain SH0165) (Haemophilus parasuis).